A 206-amino-acid polypeptide reads, in one-letter code: Ion-translocating oxidoreductase complex subunit G (206 aa).

Residues 9–29 form a helical membrane-spanning segment; sequence GITLALFAAGSTGLTAVINQM. FMN phosphoryl threonine is present on Thr-174.

Belongs to the RnfG family. In terms of assembly, the complex is composed of six subunits: RsxA, RsxB, RsxC, RsxD, RsxE and RsxG. It depends on FMN as a cofactor.

It is found in the cell inner membrane. In terms of biological role, part of a membrane-bound complex that couples electron transfer with translocation of ions across the membrane. Required to maintain the reduced state of SoxR. This chain is Ion-translocating oxidoreductase complex subunit G, found in Salmonella typhi.